The following is a 245-amino-acid chain: Platelet-derived growth factor subunit B (245 aa).

The N-terminal stretch at 1–20 (MNRCWALFLSLCCYLRLVSA) is a signal peptide. Positions 21-81 (EGDPIPEELY…ELESLSRGRR (61 aa)) are cleaved as a propeptide — removed in mature form. An N-linked (GlcNAc...) asparagine glycan is attached at Asn-63. Cystine bridges form between Cys-101/Cys-145, Cys-134/Cys-182, and Cys-138/Cys-184. The propeptide at 195–245 (RSPGSSQEQRARTPQTRVTIRTVRVRRPPKGKHQKFKHTHDKKALKETLGA) is removed in mature form. Over residues 220-235 (RRPPKGKHQKFKHTHD) the composition is skewed to basic residues. Positions 220 to 245 (RRPPKGKHQKFKHTHDKKALKETLGA) are disordered. Residues 236-245 (KKALKETLGA) are compositionally biased toward basic and acidic residues.

This sequence belongs to the PDGF/VEGF growth factor family. In terms of assembly, antiparallel homodimer; disulfide-linked. Antiparallel heterodimer with PDGFA; disulfide-linked. The PDGFB homodimer interacts with PDGFRA and PDGFRB homodimers, and with heterodimers formed by PDGFRA and PDGFRB. The heterodimer composed of PDGFA and PDGFB interacts with PDGFRB homodimers, and with heterodimers formed by PDGFRA and PDGFRB. Interacts with XLKD1. Interacts with LRP1. Interacts with SORL1 (via the N-terminal ectodomain). Interacts with CD82; this interaction inhibits PDGFB-mediated signaling pathway.

The protein localises to the secreted. Growth factor that plays an essential role in the regulation of embryonic development, cell proliferation, cell migration, survival and chemotaxis. Potent mitogen for cells of mesenchymal origin. Required for normal proliferation and recruitment of pericytes and vascular smooth muscle cells in the central nervous system, skin, lung, heart and placenta. Required for normal blood vessel development, and for normal development of kidney glomeruli. Plays an important role in wound healing. Signaling is modulated by the formation of heterodimers with PDGFA. This is Platelet-derived growth factor subunit B (PDGFB) from Felis catus (Cat).